A 158-amino-acid chain; its full sequence is MKISLSLQQDFQSPELELKRAQLKKIIETTLRHVGYKEDCEIGIACVDLEESHQLNLQYREKDKPTNVLSFPSDIPEEVLPMLDALPLGDLVICIPVVLQEALEQKKTAQNHFAHLLVHGVLHLLGYDHETSDEDAEEMEGLEIEILAKLNIANPYQE.

His-119, His-123, and His-129 together coordinate Zn(2+).

Belongs to the endoribonuclease YbeY family. The cofactor is Zn(2+).

Its subcellular location is the cytoplasm. Single strand-specific metallo-endoribonuclease involved in late-stage 70S ribosome quality control and in maturation of the 3' terminus of the 16S rRNA. This Acinetobacter baumannii (strain ACICU) protein is Endoribonuclease YbeY.